Reading from the N-terminus, the 264-residue chain is Acyl-[acyl-carrier-protein]--UDP-N-acetylglucosamine O-acyltransferase (264 aa).

It belongs to the transferase hexapeptide repeat family. LpxA subfamily. In terms of assembly, homotrimer.

The protein resides in the cytoplasm. The catalysed reaction is a (3R)-hydroxyacyl-[ACP] + UDP-N-acetyl-alpha-D-glucosamine = a UDP-3-O-[(3R)-3-hydroxyacyl]-N-acetyl-alpha-D-glucosamine + holo-[ACP]. The protein operates within glycolipid biosynthesis; lipid IV(A) biosynthesis; lipid IV(A) from (3R)-3-hydroxytetradecanoyl-[acyl-carrier-protein] and UDP-N-acetyl-alpha-D-glucosamine: step 1/6. Functionally, involved in the biosynthesis of lipid A, a phosphorylated glycolipid that anchors the lipopolysaccharide to the outer membrane of the cell. This Leptothrix cholodnii (strain ATCC 51168 / LMG 8142 / SP-6) (Leptothrix discophora (strain SP-6)) protein is Acyl-[acyl-carrier-protein]--UDP-N-acetylglucosamine O-acyltransferase.